The following is a 189-amino-acid chain: uncharacterized protein (189 aa).

It belongs to the isochorismatase family.

This is an uncharacterized protein from Bacillus subtilis (strain 168).